A 343-amino-acid polypeptide reads, in one-letter code: MDENKKRALSAALSQIEKQFGKGSVMRMGDRVIEAVEVIPTGSLMLDIALGIGGLPKGRVVEIYGPESSGKTTLTLQAIAECQKLGGTAAFIDAEHALDPIYAAKLGVNVDDLLLSQPDTGEQALEIADMLVRSSSVDIVVIDSVAALTPKAEIEGEMGDQLPGLQARLMSQALRKLTGNIKRSNTLVVFINQLRMKIGVMMPGQSPEVTTGGNALKFYASVRLDIRRIGAIKKGDEIIGNQTKIKVVKNKLAPPFKQVITEILYGEGISREGELIDMGVEAKLVDKAGAWYSYGDERIGQGKDNARGYLRDNPQVAIKLEAELREKFQPAEAPREAGETESE.

Residue 65–72 (GPESSGKT) participates in ATP binding.

It belongs to the RecA family.

The protein resides in the cytoplasm. Can catalyze the hydrolysis of ATP in the presence of single-stranded DNA, the ATP-dependent uptake of single-stranded DNA by duplex DNA, and the ATP-dependent hybridization of homologous single-stranded DNAs. It interacts with LexA causing its activation and leading to its autocatalytic cleavage. The sequence is that of Protein RecA from Xanthomonas campestris pv. campestris (strain 8004).